A 410-amino-acid chain; its full sequence is LL-diaminopimelate aminotransferase (410 aa).

Tyr15 and Gly42 together coordinate substrate. Pyridoxal 5'-phosphate-binding positions include Tyr72, 108 to 109, Tyr132, Asn187, Tyr218, and 246 to 248; these read AK and SFS. Substrate is bound by residues Lys109, Tyr132, and Asn187. The residue at position 249 (Lys249) is an N6-(pyridoxal phosphate)lysine. Residues Arg257 and Asn292 each coordinate pyridoxal 5'-phosphate. 2 residues coordinate substrate: Asn292 and Arg388.

This sequence belongs to the class-I pyridoxal-phosphate-dependent aminotransferase family. LL-diaminopimelate aminotransferase subfamily. Homodimer. Requires pyridoxal 5'-phosphate as cofactor.

The enzyme catalyses (2S,6S)-2,6-diaminopimelate + 2-oxoglutarate = (S)-2,3,4,5-tetrahydrodipicolinate + L-glutamate + H2O + H(+). Its pathway is amino-acid biosynthesis; L-lysine biosynthesis via DAP pathway; LL-2,6-diaminopimelate from (S)-tetrahydrodipicolinate (aminotransferase route): step 1/1. Its function is as follows. Involved in the synthesis of meso-diaminopimelate (m-DAP or DL-DAP), required for both lysine and peptidoglycan biosynthesis. Catalyzes the direct conversion of tetrahydrodipicolinate to LL-diaminopimelate. Can also use m-DAP instead of LL-DAP as the amino-group donor. The protein is LL-diaminopimelate aminotransferase of Acetivibrio thermocellus (strain ATCC 27405 / DSM 1237 / JCM 9322 / NBRC 103400 / NCIMB 10682 / NRRL B-4536 / VPI 7372) (Clostridium thermocellum).